We begin with the raw amino-acid sequence, 319 residues long: Beta-ketoacyl-[acyl-carrier-protein] synthase III (319 aa).

Active-site residues include Cys113 and His246. An ACP-binding region spans residues 247–251; it reads QANLR. The active site involves Asn276.

Belongs to the thiolase-like superfamily. FabH family. Homodimer.

Its subcellular location is the cytoplasm. The catalysed reaction is malonyl-[ACP] + acetyl-CoA + H(+) = 3-oxobutanoyl-[ACP] + CO2 + CoA. The protein operates within lipid metabolism; fatty acid biosynthesis. Functionally, catalyzes the condensation reaction of fatty acid synthesis by the addition to an acyl acceptor of two carbons from malonyl-ACP. Catalyzes the first condensation reaction which initiates fatty acid synthesis and may therefore play a role in governing the total rate of fatty acid production. Possesses both acetoacetyl-ACP synthase and acetyl transacylase activities. Its substrate specificity determines the biosynthesis of branched-chain and/or straight-chain of fatty acids. This is Beta-ketoacyl-[acyl-carrier-protein] synthase III from Laribacter hongkongensis (strain HLHK9).